A 294-amino-acid chain; its full sequence is tRNA dimethylallyltransferase (294 aa).

10 to 17 lines the ATP pocket; the sequence is GPTAVGKT. 12–17 is a substrate binding site; it reads TAVGKT. The segment at 35–38 is interaction with substrate tRNA; it reads DSQQ.

Belongs to the IPP transferase family. Monomer. Mg(2+) serves as cofactor.

The catalysed reaction is adenosine(37) in tRNA + dimethylallyl diphosphate = N(6)-dimethylallyladenosine(37) in tRNA + diphosphate. Functionally, catalyzes the transfer of a dimethylallyl group onto the adenine at position 37 in tRNAs that read codons beginning with uridine, leading to the formation of N6-(dimethylallyl)adenosine (i(6)A). This chain is tRNA dimethylallyltransferase, found in Streptococcus pneumoniae (strain Taiwan19F-14).